The following is a 213-amino-acid chain: Probable transaldolase (213 aa).

The active-site Schiff-base intermediate with substrate is lysine 83.

It belongs to the transaldolase family. Type 3B subfamily.

The protein localises to the cytoplasm. The catalysed reaction is D-sedoheptulose 7-phosphate + D-glyceraldehyde 3-phosphate = D-erythrose 4-phosphate + beta-D-fructose 6-phosphate. It participates in carbohydrate degradation; pentose phosphate pathway; D-glyceraldehyde 3-phosphate and beta-D-fructose 6-phosphate from D-ribose 5-phosphate and D-xylulose 5-phosphate (non-oxidative stage): step 2/3. Functionally, transaldolase is important for the balance of metabolites in the pentose-phosphate pathway. The protein is Probable transaldolase of Desulfitobacterium hafniense (strain DSM 10664 / DCB-2).